We begin with the raw amino-acid sequence, 479 residues long: Sulfate adenylyltransferase subunit 1 (479 aa).

In terms of domain architecture, tr-type G spans 25–239; the sequence is KSLLRFLTCG…EVLETVDIQR (215 aa). A G1 region spans residues 34 to 41; it reads GSVDDGKS. 34-41 lines the GTP pocket; that stretch reads GSVDDGKS. The interval 92–96 is G2; the sequence is GITID. The segment at 113 to 116 is G3; sequence DTPG. Residues 113–117 and 168–171 each bind GTP; these read DTPGH and NKMD. The interval 168 to 171 is G4; the sequence is NKMD. The interval 206–208 is G5; that stretch reads SAL.

It belongs to the TRAFAC class translation factor GTPase superfamily. Classic translation factor GTPase family. CysN/NodQ subfamily. In terms of assembly, heterodimer composed of CysD, the smaller subunit, and CysN.

It catalyses the reaction sulfate + ATP + H(+) = adenosine 5'-phosphosulfate + diphosphate. The protein operates within sulfur metabolism; hydrogen sulfide biosynthesis; sulfite from sulfate: step 1/3. With CysD forms the ATP sulfurylase (ATPS) that catalyzes the adenylation of sulfate producing adenosine 5'-phosphosulfate (APS) and diphosphate, the first enzymatic step in sulfur assimilation pathway. APS synthesis involves the formation of a high-energy phosphoric-sulfuric acid anhydride bond driven by GTP hydrolysis by CysN coupled to ATP hydrolysis by CysD. This is Sulfate adenylyltransferase subunit 1 from Salmonella heidelberg (strain SL476).